Consider the following 268-residue polypeptide: MSGFLIALFWVIFSKYVFDVLFFREAKIEREIFGNKNLALSLSYAGYFLGLAFSFYSVYFYESLFREVLYLIFVSFTLLLGVYIFDLIFLRKIDLKEEILRGNAGAGITQGIYFLSLGILISASFWRKESFILSVIYSLIYLSLGMVMLFISTLLMSRLLKLNFEEEVKKENFSASLVLGSITLGVSVVLYGAISGEFMGSLIFDLFSTVLYFVVSQVLMVIFYVVVEFLLFRKVILSSEVYENNLSASLILSATFIASAFITLAVMG.

8 helical membrane-spanning segments follow: residues 5–24, 37–59, 69–91, 104–126, 130–152, 173–195, 210–232, and 245–267; these read LIAL…LFFR, NLAL…YSVY, LYLI…IFLR, AGAG…ASFW, SFIL…LFIS, FSAS…GAIS, VLYF…FLLF, and NLSA…LAVM.

The protein belongs to the UPF0719 family.

It is found in the cell membrane. The polypeptide is UPF0719 transmembrane protein aq_1349 (Aquifex aeolicus (strain VF5)).